Reading from the N-terminus, the 637-residue chain is Early transcription factor 70 kDa subunit (637 aa).

The protein belongs to the helicase family. VETF subfamily. Heterodimer of a 70 kDa and a 82 kDa subunit. Part of the early transcription complex composed of ETF, RAP94/OPG109, and the DNA-directed RNA polymerase. In terms of processing, apparently non-glycosylated.

It is found in the virion. Its function is as follows. Acts with RNA polymerase to initiate transcription from early gene promoters. Is recruited by the RPO-associated protein of 94 kDa RAP94/OPG109 to form the early transcription complex, which also contains the core RNA polymerase. ETF heterodimer binds to early gene promoters. This Monkeypox virus protein is Early transcription factor 70 kDa subunit (OPG118).